The following is a 175-amino-acid chain: Ribosome maturation factor RimM (175 aa).

Positions 95-175 (SEDEFYWREL…RIEVDWDPGF (81 aa)) constitute a PRC barrel domain.

It belongs to the RimM family. As to quaternary structure, binds ribosomal protein uS19.

It is found in the cytoplasm. An accessory protein needed during the final step in the assembly of 30S ribosomal subunit, possibly for assembly of the head region. Essential for efficient processing of 16S rRNA. May be needed both before and after RbfA during the maturation of 16S rRNA. It has affinity for free ribosomal 30S subunits but not for 70S ribosomes. This chain is Ribosome maturation factor RimM, found in Aliivibrio salmonicida (strain LFI1238) (Vibrio salmonicida (strain LFI1238)).